Here is a 313-residue protein sequence, read N- to C-terminus: Lactamase-like protein ptaB (313 aa).

Residues H104, H106, D108, and H109 each coordinate Zn(2+). The Proton donor/acceptor role is filled by D108.

The protein belongs to the metallo-beta-lactamase superfamily. It depends on Zn(2+) as a cofactor.

The enzyme catalyses atrochrysone carboxyl-[ACP] + H2O = atrochrysone carboxylate + holo-[ACP] + H(+). The protein operates within secondary metabolite biosynthesis. In terms of biological role, lactamase-like protein; part of the gene cluster that mediates the biosynthesis of pestheic acid, a diphenyl ether which is a biosynthetic precursor of the unique chloropupukeananes. The biosynthesis initiates from condensation of acetate and malonate units catalyzed by the non-reducing PKS ptaA. As the ptaA protein is TE/CLC domain-deficient, hydrolysis and Claisen cyclization of the polyketide could be catalyzed by ptaB containing a beta-lactamase domain. The ptaB protein might hydrolyze the thioester bond between the ACP of ptaA and the intermediate to release atrochrysone carboxylic acid, which is spontaneously dehydrated to form endocrocin anthrone. Endocrocin anthrone is then converted to endocrocin, catalyzed by the anthrone oxygenase ptaC. Spontaneous decarboxylation of endocrocin occurs to generate emodin. An O-methyltransferase (ptaH or ptaI) could methylate emodin to form physcion. PtaJ could then catalyze the oxidative cleavage of physcion, and rotation of the intermediate could then afford desmethylisosulochrin. PtaF, a putative NADH-dependent oxidoreductase, might also participate in the oxidative cleavage step. Desmethylisosulochrin is then transformed by another O-methyltransferase (ptaH or ptaI) to form isosulochrin. Chlorination of isosulochrin by ptaM in the cyclohexadienone B ring then produces chloroisosulochrin. PtaE is responsible for the oxidative coupling reactions of both benzophenones isosulochrin and chloroisosulochrin to RES-1214-1 and pestheic acid respectively, regardless of chlorination. This Pestalotiopsis fici (strain W106-1 / CGMCC3.15140) protein is Lactamase-like protein ptaB.